We begin with the raw amino-acid sequence, 82 residues long: Endocuticle structural glycoprotein SgAbd-5 (82 aa).

Position 1 is a pyrrolidone carboxylic acid (glutamine 1). The region spanning 18–82 (LGQYNFAYRT…ENGYQPRVQS (65 aa)) is the Chitin-binding type R&amp;R domain.

Component of the soft endocuticle of desert locust. This Schistocerca gregaria (Desert locust) protein is Endocuticle structural glycoprotein SgAbd-5.